The primary structure comprises 319 residues: Methyltransferase tpcM (319 aa).

The interval 63–155 (DVGAGIGPYA…QLRPGGTFAC (93 aa)) is methyltransferase domain.

The protein belongs to the methyltransferase superfamily. Specifically expressed in conidia.

The protein operates within secondary metabolite biosynthesis. In terms of biological role, methyltransferase; part of the gene cluster that mediates the biosynthesis of trypacidin, a mycotoxin with antiprotozoal activity and that plays a role in the infection process. The pathway begins with the synthesis of atrochrysone thioester by the polyketide synthase (PKS) tpcC. The atrochrysone carboxyl ACP thioesterase tpcB then breaks the thioester bond and releases the atrochrysone carboxylic acid from tpcC. The decarboxylase tpcK converts atrochrysone carboxylic acid to atrochrysone which is further reduced into emodin anthrone. The next step is performed by the emodin anthrone oxygenase tpcL that catalyzes the oxidation of emodinanthrone to emodin. Emodin O-methyltransferase encoded by tpcA catalyzes methylation of the 8-hydroxy group of emodin to form questin. Ring cleavage of questin by questin oxidase tpcI leads to desmethylsulochrin via several intermediates including questin epoxide. Another methylation step catalyzed by tpcM leads to the formation of sulochrin which is further converted to monomethylsulfochrin by tpcH. Finally, the tpcJ catalyzes the conversion of monomethylsulfochrin to trypacidin. Trypacidin is toxic for human pulmonary and bronchial epithelial cells by initiating the intracellular formation of nitric oxide (NO) and hydrogen peroxide (H(2)O(2)), thus triggering host necrotic cell death. The trypacidin pathway is also able to produce endocrocin via a distinct route from the endocrocin Enc pathway. The polypeptide is Methyltransferase tpcM (Aspergillus fumigatus (strain ATCC MYA-4609 / CBS 101355 / FGSC A1100 / Af293) (Neosartorya fumigata)).